Consider the following 131-residue polypeptide: Small ribosomal subunit protein uS8 (131 aa).

Belongs to the universal ribosomal protein uS8 family. As to quaternary structure, part of the 30S ribosomal subunit. Contacts proteins S5 and S12.

Functionally, one of the primary rRNA binding proteins, it binds directly to 16S rRNA central domain where it helps coordinate assembly of the platform of the 30S subunit. This is Small ribosomal subunit protein uS8 from Prosthecochloris aestuarii (strain DSM 271 / SK 413).